Reading from the N-terminus, the 215-residue chain is MKLVLLGAPGCGKGTISDYLVKNYGLVHLSTGDIFRQTIDQKGPYWEELKSYISKGLLVPDELTNKILKNALDKNMDKSFILDGCIRTIAQADFLSTILDIDLALYLEVPFDVLEKRLTGRRICSKCKRIYNIHYSAPKKEDICDDDGEFLIQRKDDQKEIIDERMKVYRTNSEPLIKYYEKLNKLVAINSENLDDLEKNIDDLFINKFNLRKIA.

Position 10 to 15 (glycine 10 to threonine 15) interacts with ATP. Positions serine 30–valine 59 are NMP. AMP contacts are provided by residues threonine 31, arginine 36, leucine 57 to valine 59, and glutamine 91. The LID stretch occupies residues glycine 120–aspartate 157. Arginine 121 is a binding site for ATP. Zn(2+)-binding residues include cysteine 124 and cysteine 127. Residue isoleucine 130–tyrosine 131 participates in ATP binding. Zn(2+) contacts are provided by cysteine 144 and aspartate 147. 2 residues coordinate AMP: arginine 154 and arginine 165.

The protein belongs to the adenylate kinase family. As to quaternary structure, monomer.

Its subcellular location is the cytoplasm. The enzyme catalyses AMP + ATP = 2 ADP. It functions in the pathway purine metabolism; AMP biosynthesis via salvage pathway; AMP from ADP: step 1/1. Catalyzes the reversible transfer of the terminal phosphate group between ATP and AMP. Plays an important role in cellular energy homeostasis and in adenine nucleotide metabolism. The polypeptide is Adenylate kinase (Malacoplasma penetrans (strain HF-2) (Mycoplasma penetrans)).